We begin with the raw amino-acid sequence, 201 residues long: ATP-dependent Clp protease proteolytic subunit (201 aa).

Serine 98 (nucleophile) is an active-site residue. Histidine 123 is a catalytic residue.

This sequence belongs to the peptidase S14 family. In terms of assembly, fourteen ClpP subunits assemble into 2 heptameric rings which stack back to back to give a disk-like structure with a central cavity, resembling the structure of eukaryotic proteasomes.

It localises to the cytoplasm. The catalysed reaction is Hydrolysis of proteins to small peptides in the presence of ATP and magnesium. alpha-casein is the usual test substrate. In the absence of ATP, only oligopeptides shorter than five residues are hydrolyzed (such as succinyl-Leu-Tyr-|-NHMec, and Leu-Tyr-Leu-|-Tyr-Trp, in which cleavage of the -Tyr-|-Leu- and -Tyr-|-Trp bonds also occurs).. Cleaves peptides in various proteins in a process that requires ATP hydrolysis. Has a chymotrypsin-like activity. Plays a major role in the degradation of misfolded proteins. The polypeptide is ATP-dependent Clp protease proteolytic subunit (Rickettsia canadensis (strain McKiel)).